The sequence spans 836 residues: Glutamate receptor ionotropic, kainate glr-3 (836 aa).

Residues 1 to 19 (MFWIAKTLIAFLILLKTDC) form the signal peptide. Topologically, residues 20–523 (YKIAIPANLI…WFKFMDPLST (504 aa)) are extracellular. C76 and C320 are disulfide-bonded. N-linked (GlcNAc...) asparagine glycosylation is found at N225, N257, N356, N391, and N419. L-glutamate is bound by residues 478-480 (SLT) and R485. The helical transmembrane segment at 524-544 (QVWIMTFASYFVVSVAIWIIA) threads the bilayer. The Cytoplasmic segment spans residues 545–600 (KISPYEQFERDEDNGQYKPVDNQFSLRNSFWFTVCSLMQQGSELCPRAASTRLLTG). A helical membrane pass occupies residues 601–621 (IWWFFALILISSYTANLAAVL). Residues 622–780 (TTRRMETPIE…KRKDQDDGES (159 aa)) lie on the Extracellular side of the membrane. 651-652 (ST) is a binding site for L-glutamate. A glycan (N-linked (GlcNAc...) asparagine) is linked at N657. E699 provides a ligand contact to L-glutamate. The chain crosses the membrane as a helical span at residues 781–801 (IGGIFIILVVGLVLTAVLVIF). The Cytoplasmic portion of the chain corresponds to 802 to 836 (ELITTRKPSPAQSQVIRHVNVIPSFKLGFFRWNVN).

It belongs to the glutamate-gated ion channel (TC 1.A.10.1) family. In terms of tissue distribution, expressed in the intestine and in the ASER neuron. Also expressed in the thermosensitive RIA interneuron.

The protein resides in the cell membrane. Its subcellular location is the postsynaptic cell membrane. Its activity is regulated as follows. Activated by low temperature of 18 degrees Celsius in ASER neuron. In terms of biological role, ionotropic glutamate receptor. Activation by glutamate requires additional verification. L-glutamate acts as an excitatory neurotransmitter at many synapses in the central nervous system. Binding of the excitatory neurotransmitter L-glutamate induces a conformation change, leading to the opening of the cation channel, and thereby converts the chemical signal to an electrical impulse. The receptor then desensitizes rapidly and enters a transient inactive state, characterized by the presence of bound agonist. Functionally, independent of its ionotropic glutamate receptor activity, acts as a thermoreceptor in the ASER neuron where it triggers a calcium response to activate cold avoidance behavior in response to temperatures below 19 degrees Celsius. Possibly functions as a metabotropic cold receptor and acts upstream of the G(o) G protein goa-1 in the ASER neuron. Also functions in cold sensing in the intestine. The chain is Glutamate receptor ionotropic, kainate glr-3 from Caenorhabditis elegans.